The chain runs to 671 residues: Annexin A6 (671 aa).

Annexin repeat units follow at residues 18–89 (FNAS…SLMR), 90–161 (PPAY…VLLQ), 173–245 (DLVE…AVVK), 249–320 (STAE…KLCE), 361–432 (FNDD…GLML), 433–504 (TPAQ…SLAL), 519–594 (EDAK…AIVR), and 598–669 (NKPA…LCGG).

This sequence belongs to the annexin family.

The protein localises to the cytoplasm. The protein resides in the melanosome. Its function is as follows. May associate with CD21. May regulate the release of Ca(2+) from intracellular stores. In Gallus gallus (Chicken), this protein is Annexin A6 (ANXA6).